The chain runs to 327 residues: GTPase Obg (327 aa).

The Obg domain occupies 1-159; it reads MQFIDQANII…WEVQLELKLL (159 aa). Positions 160–327 constitute an OBG-type G domain; the sequence is AEVGIIGLPN…SLLSEVWNRI (168 aa). Residues 166-173, 191-195, 213-216, 280-283, and 309-311 each bind ATP; these read GLPNAGKS, FTTLI, DIPG, NKKE, and SSA. Positions 173 and 193 each coordinate Mg(2+).

Belongs to the TRAFAC class OBG-HflX-like GTPase superfamily. OBG GTPase family. As to quaternary structure, monomer. Mg(2+) serves as cofactor.

It is found in the cytoplasm. Its function is as follows. An essential GTPase which binds GTP, GDP and possibly (p)ppGpp with moderate affinity, with high nucleotide exchange rates and a fairly low GTP hydrolysis rate. Plays a role in control of the cell cycle, stress response, ribosome biogenesis and in those bacteria that undergo differentiation, in morphogenesis control. This chain is GTPase Obg, found in Prochlorococcus marinus (strain MIT 9515).